Consider the following 61-residue polypeptide: ATP synthase F(0) complex subunit 8 (61 aa).

The chain crosses the membrane as a helical span at residues 10 to 32 (FMILSSTWLIYTIILQPKILSHL).

This sequence belongs to the ATPase protein 8 family. In terms of assembly, component of the ATP synthase complex composed at least of ATP5F1A/subunit alpha, ATP5F1B/subunit beta, ATP5MC1/subunit c (homooctomer), MT-ATP6/subunit a, MT-ATP8/subunit 8, ATP5ME/subunit e, ATP5MF/subunit f, ATP5MG/subunit g, ATP5MK/subunit k, ATP5MJ/subunit j, ATP5F1C/subunit gamma, ATP5F1D/subunit delta, ATP5F1E/subunit epsilon, ATP5PF/subunit F6, ATP5PB/subunit b, ATP5PD/subunit d, ATP5PO/subunit OSCP. ATP synthase complex consists of a soluble F(1) head domain (subunits alpha(3) and beta(3)) - the catalytic core - and a membrane F(0) domain - the membrane proton channel (subunits c, a, 8, e, f, g, k and j). These two domains are linked by a central stalk (subunits gamma, delta, and epsilon) rotating inside the F1 region and a stationary peripheral stalk (subunits F6, b, d, and OSCP).

The protein localises to the mitochondrion membrane. In terms of biological role, subunit 8, of the mitochondrial membrane ATP synthase complex (F(1)F(0) ATP synthase or Complex V) that produces ATP from ADP in the presence of a proton gradient across the membrane which is generated by electron transport complexes of the respiratory chain. ATP synthase complex consist of a soluble F(1) head domain - the catalytic core - and a membrane F(1) domain - the membrane proton channel. These two domains are linked by a central stalk rotating inside the F(1) region and a stationary peripheral stalk. During catalysis, ATP synthesis in the catalytic domain of F(1) is coupled via a rotary mechanism of the central stalk subunits to proton translocation. In vivo, can only synthesize ATP although its ATP hydrolase activity can be activated artificially in vitro. Part of the complex F(0) domain. The chain is ATP synthase F(0) complex subunit 8 from Chelonia mydas (Green sea-turtle).